Reading from the N-terminus, the 266-residue chain is Calpain small subunit 1 (266 aa).

At methionine 1 the chain carries N-acetylmethionine. Serine 6 bears the Phosphoserine mark. The EF-hand 1; atypical domain maps to 94 to 128 (EEVRQFRRLFAQLAGDDMEVSATELMNILNKVVTR). Ca(2+) is bound by residues alanine 107, aspartate 110, glutamate 112, glutamate 117, aspartate 135, aspartate 150, aspartate 152, threonine 154, lysine 156, and glutamate 161. EF-hand domains are found at residues 137–170 (FGID…NNIK), 167–202 (NNIK…AGFH), 203–231 (LNEH…ISCL), and 232–266 (VRLD…TMYS). Lysine 177 is modified (N6-acetyllysine). Ca(2+) is bound by residues aspartate 180, aspartate 182, serine 184, threonine 186, glutamate 191, and aspartate 223.

Homodimer or heterodimer of a large (catalytic) and a small (regulatory) subunit. In presence of calcium, the heterodimer dissociates.

It is found in the cytoplasm. The protein resides in the cell membrane. Regulatory subunit of the calcium-regulated non-lysosomal thiol-protease which catalyzes limited proteolysis of substrates involved in cytoskeletal remodeling and signal transduction. Essential for embryonic development. This chain is Calpain small subunit 1 (CAPNS1), found in Sus scrofa (Pig).